The primary structure comprises 519 residues: Asteroid homolog 1 (519 aa).

It belongs to the asteroid family.

The protein localises to the cytoplasm. Its subcellular location is the mitochondrion. The polypeptide is Asteroid homolog 1 (ast1) (Schizosaccharomyces pombe (strain 972 / ATCC 24843) (Fission yeast)).